An 84-amino-acid chain; its full sequence is uncharacterized protein (84 aa).

A run of 2 helical transmembrane segments spans residues 7–27 (HVNF…ILCI) and 52–72 (ITII…INPC).

It is found in the membrane. This is an uncharacterized protein from Saccharomyces cerevisiae (strain ATCC 204508 / S288c) (Baker's yeast).